The chain runs to 443 residues: Xaa-Pro dipeptidase (443 aa).

Positions 246, 257, 339, 384, and 423 each coordinate Mn(2+).

Belongs to the peptidase M24B family. Bacterial-type prolidase subfamily. Mn(2+) is required as a cofactor.

The enzyme catalyses Xaa-L-Pro dipeptide + H2O = an L-alpha-amino acid + L-proline. In terms of biological role, splits dipeptides with a prolyl residue in the C-terminal position. In Pectobacterium carotovorum subsp. carotovorum (strain PC1), this protein is Xaa-Pro dipeptidase.